A 1571-amino-acid chain; its full sequence is MYHHEDDTNSDMNSDDDMSRSGRETPPPRPSHAFGSERDLERRGRSRDVEPRDRWPYTRNPRSRLPQRDLSLPVMSRPHFGLDRDDDRRSMDYESRSQDAESYQNVVELKEDKKPQNPIQDNLENYRKLLSLGVQLAEDDRHSHMTQGHSSRSKRTAYPSTSRGLKPMPEAKKPSHRRGICEDESSHGVIMEKFIKDVARNPKSGRARELNERPPPRFPRPNDNWKDSSSSRRESVIQERGYEGSAFRGGFRFNADLASRSRALERKRRYHFDSDERGSGHEHKSCVRKKPFECGAEMRQAMSMGNLNSPSFSESQSIDFGANPYVCDECGRQFSVISEFVEHQIMHTRENLYEYGESFIHSVAVNEVQKGQGGGKRFECKECGETFSRSAALAEHRQIHAREYLAECRDQEDEETIMPSPTFSELQKMYGKDKFYECKVCKETFLHSSALIEHQKIHGRGNSDDRDNERERERDRLRARAREQRERERERERERELGEPFLTCPNFNEFRKMYRKDKIYECKVCGESFLHLSSLREHQKIHTRGNPFENKSRMCEETFVPSQSLRRRQKTYREKLFDFNNARDALMGNSDSSEHQKNRSRRNFFEGRGFEKPFVESQKSHTITRPPENKDDDKPFTISVNPNDKLKFPIMENGSQGKSYERSVIHSLGSAEAQKSHGGLGFSKPRPVAESSTQSSSSIYYPRAHSGGNTYEGKEYKDSIIHSLPAPRPLKRHRANDHIQCDEGGESSIYIPDIINKGRKIPAREDAYEGSSSSNYHTPNVSRAEPPSLSGESHDSKQDVTFSVPSSSVREHQKARAKKKYIEPRNNETSVIHSLPFGELLAGHRRAKFFECQECGEAFARRSELIEHQKIHDRERPSGSRHYERSVIRSLAPSDPQTSYAQERFIQEQVRKFRAFGQRSTTSNNLSVQKIYAQETFNAEEPHDKETHGQKIHDKEPYGKEPSGKEPHGDEPQDKEPLDQEMRSEEPHDDKPHGQEPHDDKPHGQEPHDDKPHGQEPHGDEPHGQEPHGDEPHDKEPIDQEMRSEEPHSEESHGDEPHGEESHGQEKVEDATIQASVSEEHQKDDAGDAIYECQDCGLGFTDLNDLTSHQDTHSRKALVDSREYAHSEVHAHSVSEFEKKCSGEKLYECPKCGESFIHSSLLFEHQRVHEQDQLYSVKACDDAFIALLPVRPRRNCTVERNPAVSGSAIRCRQCGQGFIHSSALNEHMRQHRDNEIMEQSELSDEIFIQGLALTEYQGSETEEKLFECTICGECFFTAKQLGDHHTKVHKDEPYEYGPSYTHASFLTEPLRKHIPLYECKDCGQSFLDDTVIAERMVFHPEREGGSEIVAATAQEVEANVLIPQEVLRIQGSNAEAAEPEVEAAEPEVEAAEPEVEAAEPNGEAEGPDGEAAEPDGEAEQPNGEAEQPNGDADEPDGAGIEDPEERADEPEEDVEEPEGDADEPDGADIEDPEEEGEDQEIEVEEPYYNCHECAETFASSSAFGEHLKSHASVIIFEPANAPGECSGYIERASTSAGGAEQADDKYFKCDVCGQLFNDRLSLARHQNSHTG.

Disordered regions lie at residues 1-120 and 137-241; these read MYHH…NPIQ and AEDD…QERG. 5 stretches are compositionally biased toward basic and acidic residues: residues 35–56, 80–99, 169–186, 193–215, and 223–241; these read GSER…DRWP, FGLD…RSQD, PEAK…DESS, KFIK…ERPP, and DNWK…QERG. The 10 X 5 AA repeat of P-H-X-X-E stretch occupies residues 199–265; the sequence is ARNPKSGRAR…DLASRSRALE (67 aa). Residues 199 to 265 are 3 X 5 AA repeat of P-H-D-D-K; that stretch reads ARNPKSGRAR…DLASRSRALE (67 aa). C2H2-type zinc fingers lie at residues 325 to 347, 378 to 400, 436 to 458, and 520 to 542; these read YVCD…QIMH, FECK…RQIH, and YECK…QKIH. The disordered stretch occupies residues 456–495; it reads KIHGRGNSDDRDNERERERDRLRARAREQRERERERERER. Disordered stretches follow at residues 585–649, 672–713, and 764–820; these read ALMG…LKFP, EAQK…TYEG, and REDA…AKKK. Over residues 592 to 614 the composition is skewed to basic and acidic residues; that stretch reads SSEHQKNRSRRNFFEGRGFEKPF. Composition is skewed to polar residues over residues 770 to 781 and 799 to 808; these read GSSSSNYHTPNV and DVTFSVPSSS. Positions 809 to 820 are enriched in basic and acidic residues; it reads VREHQKARAKKK. A C2H2-type 5 zinc finger spans residues 850 to 872; the sequence is FECQECGEAFARRSELIEHQKIH. Residues 937-1070 form a disordered region; that stretch reads FNAEEPHDKE…ESHGQEKVED (134 aa). Basic and acidic residues predominate over residues 940–1070; the sequence is EEPHDKETHG…ESHGQEKVED (131 aa). 13 consecutive repeat copies span residues 942–946, 967–971, 987–991, 992–996, 997–1001, 1002–1006, 1007–1011, 1012–1016, 1017–1021, 1022–1026, 1027–1031, 1032–1036, and 1047–1051. C2H2-type zinc fingers lie at residues 1091–1113, 1147–1169, 1209–1231, and 1266–1289; these read YECQ…QDTH, YECP…QRVH, IRCR…MRQH, and FECT…TKVH. Residues 1317 to 1339 form a C2H2-type 10; degenerate zinc finger; sequence YECKDCGQSFLDDTVIAERMVFH. The tract at residues 1373–1487 is disordered; that stretch reads NAEAAEPEVE…DQEIEVEEPY (115 aa). 3 stretches are compositionally biased toward acidic residues: residues 1377–1397, 1405–1418, and 1431–1485; these read AEPE…EVEA, EGPD…DGEA, and DADE…EVEE. C2H2-type zinc fingers lie at residues 1488-1510 and 1547-1569; these read YNCH…LKSH and FKCD…QNSH.

This sequence belongs to the krueppel C2H2-type zinc-finger protein family. Homodimer. Interacts with SIAH1A and SIAH2. Interacts with TRAF2. In terms of tissue distribution, brain, glial cells, neurons, skeletal muscle, uterus and placenta. In the placenta it is found in all trophoblast cells.

It is found in the nucleus. Its subcellular location is the cytoplasm. In terms of biological role, induces apoptosis in cooperation with SIAH1A. Acts as a mediator between p53/TP53 and BAX in a neuronal death pathway that is activated by DNA damage. Acts synergistically with TRAF2 and inhibits TNF induced apoptosis through activation of NF-kappa-B. Plays a role in regulating maternal behavior and offspring growth. The sequence is that of Paternally-expressed gene 3 protein (Peg3) from Mus musculus (Mouse).